The following is a 51-amino-acid chain: Basic phospholipase A2 Bfon11 (51 aa).

Ca(2+) contacts are provided by Tyr27, Gly29, and Gly31. Residues Cys28 and Cys43 are joined by a disulfide bond. Residue His46 is part of the active site. Residue Asp47 participates in Ca(2+) binding.

It belongs to the phospholipase A2 family. Group II subfamily. D49 sub-subfamily. The cofactor is Ca(2+). In terms of tissue distribution, expressed by the venom gland.

The protein resides in the secreted. The enzyme catalyses a 1,2-diacyl-sn-glycero-3-phosphocholine + H2O = a 1-acyl-sn-glycero-3-phosphocholine + a fatty acid + H(+). In terms of biological role, snake venom phospholipase A2 (PLA2) that impairs hemostasis. PLA2 catalyzes the calcium-dependent hydrolysis of the 2-acyl groups in 3-sn-phosphoglycerides. This is Basic phospholipase A2 Bfon11 from Bothrops fonsecai (Fonseca's lancehead).